The chain runs to 339 residues: Putative ABC transporter ATP-binding protein MG467 homolog (339 aa).

Positions 41–87 (KKTKKAKPAKVKKVKEPKAKAVKPEQVKPTKTTKAPKPKKPKKQGGL) are disordered. Basic residues predominate over residues 42–53 (KTKKAKPAKVKK). The segment covering 54–68 (VKEPKAKAVKPEQVK) has biased composition (basic and acidic residues). Positions 74 to 83 (KAPKPKKPKK) are enriched in basic residues. Residues 112 to 338 (ISIDKMWKHV…IVSNELVRPL (227 aa)) enclose the ABC transporter domain. 150-157 (GPSGSGKT) lines the ATP pocket.

It belongs to the ABC transporter superfamily.

The protein is Putative ABC transporter ATP-binding protein MG467 homolog of Mycoplasma pneumoniae (strain ATCC 29342 / M129 / Subtype 1) (Mycoplasmoides pneumoniae).